The sequence spans 543 residues: T-complex protein 1 subunit eta (543 aa).

Met1 is modified (N-acetylmethionine). Position 41 (Gly41) interacts with ADP. Gly41 is an ATP binding site. Lys67 carries the N6-acetyllysine modification. Residue Asp92 coordinates Mg(2+). The ADP site is built by Gly93, Thr94, Thr95, Ser96, Ser164, and Ser165. Gly93 is a binding site for ATP. Ser96 is an ATP binding site. An N6-acetyllysine mark is found at Lys250 and Lys320. Positions 398 and 409 each coordinate ATP. Residue Gly409 coordinates ADP. A Glycyl lysine isopeptide (Lys-Gly) (interchain with G-Cter in SUMO2) cross-link involves residue Lys430. 2 residues coordinate ADP: Glu494 and Arg499. Arg499 contacts ATP. Residues 524–543 (RSTVDASPAAGRGRGRGRLH) form a disordered region. At Arg535 the chain carries Omega-N-methylarginine.

Belongs to the TCP-1 chaperonin family. In terms of assembly, component of the chaperonin-containing T-complex (TRiC), a hexadecamer composed of two identical back-to-back stacked rings enclosing a protein folding chamber. Each ring is made up of eight different subunits: TCP1/CCT1, CCT2, CCT3, CCT4, CCT5, CCT6A/CCT6, CCT7, CCT8. Interacts with PACRG. Interacts with DLEC1.

It localises to the cytoplasm. It catalyses the reaction ATP + H2O = ADP + phosphate + H(+). Component of the chaperonin-containing T-complex (TRiC), a molecular chaperone complex that assists the folding of actin, tubulin and other proteins upon ATP hydrolysis. The TRiC complex mediates the folding of WRAP53/TCAB1, thereby regulating telomere maintenance. In Bos taurus (Bovine), this protein is T-complex protein 1 subunit eta (CCT7).